A 625-amino-acid chain; its full sequence is Probable potassium transport system protein Kup 2 (625 aa).

The next 12 membrane-spanning stretches (helical) occupy residues 15–35 (LSFA…LYAF), 52–72 (ILSL…LVIV), 98–118 (GGWL…DGIL), 134–154 (LSPN…FFLF), 164–184 (IGIY…VLGF), 203–223 (IYFF…VFLV), 246–266 (WFAV…AFVL), 284–304 (FLPV…QAII), 336–356 (VYLP…VVIF), 365–385 (AYGI…GIIA), 394–414 (FKVM…AGNI), and 417–437 (LLTG…VMYT).

This sequence belongs to the HAK/KUP transporter (TC 2.A.72) family.

The protein localises to the cell inner membrane. The enzyme catalyses K(+)(in) + H(+)(in) = K(+)(out) + H(+)(out). Functionally, transport of potassium into the cell. Likely operates as a K(+):H(+) symporter. This chain is Probable potassium transport system protein Kup 2, found in Legionella pneumophila subsp. pneumophila (strain Philadelphia 1 / ATCC 33152 / DSM 7513).